Here is a 250-residue protein sequence, read N- to C-terminus: Ureidoacrylate amidohydrolase RutB (250 aa).

The active-site Proton acceptor is aspartate 44. Lysine 153 is an active-site residue. The active-site Nucleophile is the cysteine 186.

Belongs to the isochorismatase family. RutB subfamily.

It carries out the reaction (Z)-3-ureidoacrylate + H2O + H(+) = (Z)-3-aminoacrylate + NH4(+) + CO2. The enzyme catalyses (Z)-3-ureidoacrylate + H2O = (Z)-3-aminoacrylate + carbamate + H(+). The catalysed reaction is (Z)-2-methylureidoacrylate + H2O + H(+) = (Z)-2-methylaminoacrylate + NH4(+) + CO2. In terms of biological role, hydrolyzes ureidoacrylate to form aminoacrylate and carbamate. The carbamate hydrolyzes spontaneously, thereby releasing one of the nitrogen atoms of the pyrimidine ring as ammonia and one of its carbon atoms as CO2. The sequence is that of Ureidoacrylate amidohydrolase RutB from Pantoea ananatis (strain LMG 20103).